Here is a 315-residue protein sequence, read N- to C-terminus: Cross-pathway control WD-repeat protein 2 (315 aa).

WD repeat units lie at residues 14–54 (GHKG…DSYG), 62–101 (GHNH…TTRR), 104–144 (GHTS…YDIK), 147–188 (CHTE…LKTN), 191–230 (GHTG…HLYS), 232–270 (EAGD…IVDE), and 282–315 (GRQP…TVTS).

The protein belongs to the WD repeat G protein beta family. Ribosomal protein RACK1 subfamily.

Its function is as follows. Component of the ribosome, a large ribonucleoprotein complex responsible for the synthesis of proteins in the cell. The small ribosomal subunit (SSU) binds messenger RNAs (mRNAs) and translates the encoded message by selecting cognate aminoacyl-transfer RNA (tRNA) molecules. The large subunit (LSU) contains the ribosomal catalytic site termed the peptidyl transferase center (PTC), which catalyzes the formation of peptide bonds, thereby polymerizing the amino acids delivered by tRNAs into a polypeptide chain. The nascent polypeptides leave the ribosome through a tunnel in the LSU and interact with protein factors that function in enzymatic processing, targeting, and the membrane insertion of nascent chains at the exit of the ribosomal tunnel. Plays in important role in the regulation of vegetative growth and fruiting body development. Especially, positively regulates the expression of genes involved in fruiting body development such as FVFD30 and FVFD16, as well as genes encoding for lectins and hydrophobins. Also regulates the expression of genes involved in cAMP signaling pathway. In Flammulina velutipes (Agaricus velutipes), this protein is Cross-pathway control WD-repeat protein 2.